Here is a 588-residue protein sequence, read N- to C-terminus: Nucleoporin ndc-1 (588 aa).

The span at 1–12 shows a compositional bias: polar residues; it reads MMGDSHSSFTTT. Positions 1-55 are disordered; it reads MMGDSHSSFTTTTDEHLYNQFSPGRRKNDFPAASSSSSSPNLRRSPNRTVSSPRV. Topologically, residues 1 to 79 are cytoplasmic; that stretch reads MMGDSHSSFT…FQAEISVRKR (79 aa). Positions 31-48 are enriched in low complexity; that stretch reads PAASSSSSSPNLRRSPNR. Residues 80-100 form a helical membrane-spanning segment; it reads LAGAACGYLSTIFFIVTVSIL. Over 101–122 the chain is Perinuclear space; sequence KLTIWAPFSSVQDSLAWWIYPN. A helical transmembrane segment spans residues 123–143; sequence AWASIIFVGIASVAMSLFSII. Topologically, residues 144-159 are cytoplasmic; that stretch reads KFCKVDQLPRLAATDT. A helical membrane pass occupies residues 160 to 180; it reads FALAGVALEFVTRLTFVYTAF. The Perinuclear space portion of the chain corresponds to 181-190; the sequence is CVADFSFSRE. Residues 191–211 traverse the membrane as a helical segment; the sequence is FAFVAISLAIAISSALVVFRS. Over 212-255 the chain is Cytoplasmic; the sequence is DYQLNFSHIQVNSVKTLIDFGTSLPYANISEICGIDAAISYTAA. A helical transmembrane segment spans residues 256–276; sequence VALILVVGPMVSGFSAWWLLL. A topological domain (perinuclear space) is located at residue Asn277. A helical transmembrane segment spans residues 278–298; that stretch reads IPFHVVLFGLCFTQQFYSKIS. Residues 299 to 588 lie on the Cytoplasmic side of the membrane; sequence MKIVNQIVMK…IRMICLTDEL (290 aa).

It belongs to the NDC1 family.

The protein localises to the nucleus. It is found in the nuclear pore complex. Its subcellular location is the nucleus membrane. Component of the nuclear pore complex (NPC), which plays a key role in de novo assembly and insertion of NPC in the nuclear envelope. Plays a role in postmitotic nuclear pore complex assembly potentially by promoting localization of nuclear pore complex proteins to the nuclear rim. This chain is Nucleoporin ndc-1, found in Caenorhabditis elegans.